Here is a 214-residue protein sequence, read N- to C-terminus: A-type ATP synthase subunit D (214 aa).

Belongs to the V-ATPase D subunit family. Has multiple subunits with at least A(3), B(3), C, D, E, F, H, I and proteolipid K(x).

The protein resides in the cell membrane. In terms of biological role, component of the A-type ATP synthase that produces ATP from ADP in the presence of a proton gradient across the membrane. This chain is A-type ATP synthase subunit D, found in Methanosphaera stadtmanae (strain ATCC 43021 / DSM 3091 / JCM 11832 / MCB-3).